The chain runs to 1342 residues: DNA-directed RNA polymerase subunit beta (1342 aa).

Belongs to the RNA polymerase beta chain family. In terms of assembly, the RNAP catalytic core consists of 2 alpha, 1 beta, 1 beta' and 1 omega subunit. When a sigma factor is associated with the core the holoenzyme is formed, which can initiate transcription.

It catalyses the reaction RNA(n) + a ribonucleoside 5'-triphosphate = RNA(n+1) + diphosphate. Functionally, DNA-dependent RNA polymerase catalyzes the transcription of DNA into RNA using the four ribonucleoside triphosphates as substrates. This Cronobacter sakazakii (strain ATCC BAA-894) (Enterobacter sakazakii) protein is DNA-directed RNA polymerase subunit beta.